Here is a 548-residue protein sequence, read N- to C-terminus: CTP synthase (548 aa).

The segment at 1-276 (MPTELTDYDP…DQYVMEQLGL (276 aa)) is amidoligase domain. Serine 25 provides a ligand contact to CTP. Serine 25 lines the UTP pocket. Residue 26 to 31 (GLGKGI) participates in ATP binding. An L-glutamine-binding site is contributed by tyrosine 66. Aspartate 83 provides a ligand contact to ATP. The Mg(2+) site is built by aspartate 83 and glutamate 151. CTP-binding positions include 158–160 (DIE), 197–202 (KTKPTQ), and lysine 233. UTP contacts are provided by residues 197 to 202 (KTKPTQ) and lysine 233. In terms of domain architecture, Glutamine amidotransferase type-1 spans 303 to 541 (DIALVGKYAM…VETILETTDT (239 aa)). Glycine 363 provides a ligand contact to L-glutamine. The active-site Nucleophile; for glutamine hydrolysis is cysteine 390. Residues 391-394 (LGFQ), glutamate 414, and arginine 471 each bind L-glutamine. Catalysis depends on residues histidine 514 and glutamate 516.

This sequence belongs to the CTP synthase family. Homotetramer.

It carries out the reaction UTP + L-glutamine + ATP + H2O = CTP + L-glutamate + ADP + phosphate + 2 H(+). The enzyme catalyses L-glutamine + H2O = L-glutamate + NH4(+). The catalysed reaction is UTP + NH4(+) + ATP = CTP + ADP + phosphate + 2 H(+). Its pathway is pyrimidine metabolism; CTP biosynthesis via de novo pathway; CTP from UDP: step 2/2. Its activity is regulated as follows. Allosterically activated by GTP, when glutamine is the substrate; GTP has no effect on the reaction when ammonia is the substrate. The allosteric effector GTP functions by stabilizing the protein conformation that binds the tetrahedral intermediate(s) formed during glutamine hydrolysis. Inhibited by the product CTP, via allosteric rather than competitive inhibition. Functionally, catalyzes the ATP-dependent amination of UTP to CTP with either L-glutamine or ammonia as the source of nitrogen. Regulates intracellular CTP levels through interactions with the four ribonucleotide triphosphates. In Natronomonas pharaonis (strain ATCC 35678 / DSM 2160 / CIP 103997 / JCM 8858 / NBRC 14720 / NCIMB 2260 / Gabara) (Halobacterium pharaonis), this protein is CTP synthase.